The primary structure comprises 125 residues: Histone H1-like protein Hc1 (125 aa).

Residues 98-125 are disordered; that stretch reads TKAKVKPTKKAAPKTKVKTAKKTRSTKK. Residues 100–125 show a composition bias toward basic residues; that stretch reads AKVKPTKKAAPKTKVKTAKKTRSTKK.

This sequence belongs to the histone H1/H5 family. HCT subfamily.

Its function is as follows. Might have a role analogous to that of eukaryotic histone proteins. This chain is Histone H1-like protein Hc1 (hctA), found in Chlamydia trachomatis serovar L2 (strain ATCC VR-902B / DSM 19102 / 434/Bu).